The primary structure comprises 354 residues: UPF0324 membrane protein BL1094 (354 aa).

A run of 10 helical transmembrane segments spans residues 12 to 33 (IATVDMLFIGVLTLLASLFASW), 43 to 65 (FGALIIALLIGMIIQFPIRSAYV), 86 to 108 (LLRLGIILLGFKLNLAVLFTQGI), 112 to 129 (PIAAVVVTLTIIVCYAIA), 138 to 160 (LAILTAGGTGICGAAAVMGLAGS), 175 to 197 (VTMAVAIVAIMGTVFALLEIALG), 239 to 256 (LSRVLMLVFAAIIIAIWW), 271 to 293 (VAFPWFMLGFIGASIIGTFVPFV), 300 to 321 (LVDFAYIVLGMAMAALGINVNF), and 331 to 353 (PMLASFLTSILLMCFAAGVAMLF).

It belongs to the UPF0324 family.

It localises to the cell membrane. The polypeptide is UPF0324 membrane protein BL1094 (Bifidobacterium longum (strain NCC 2705)).